The primary structure comprises 351 residues: Phosphatidylinositol transfer protein PDR16 (351 aa).

In terms of domain architecture, CRAL-TRIO spans 135 to 295 (LVAVENESGK…LYGGDLKFKY (161 aa)).

In terms of assembly, homodimer. Apo-SFH3 forms a dimer through the hydrophobic interaction of gating helices. Binding of phosphatidylinositol leads to dissociation of the dimer into monomers in a reversible manner.

The protein localises to the lipid droplet. It is found in the microsome membrane. The protein resides in the endoplasmic reticulum membrane. The catalysed reaction is a 1,2-diacyl-sn-glycero-3-phospho-(1D-myo-inositol)(in) = a 1,2-diacyl-sn-glycero-3-phospho-(1D-myo-inositol)(out). Its function is as follows. Has phosphatidylinositol transfer activity. Involved in the regulation of the phospholipid composition of plasma- and endomembranes. Altering plasma membrane composition may provide a possible mechanism for multidrug resistance. Involved in the regulation of sterol biosynthesis. Contributes to efficient phospholipase D1 activation in the regulation of phospholipid turnover. Regulates the release of fatty acids from lipid droplets. The protein is Phosphatidylinositol transfer protein PDR16 (PDR16) of Saccharomyces cerevisiae (strain ATCC 204508 / S288c) (Baker's yeast).